Here is a 420-residue protein sequence, read N- to C-terminus: Tyrosine--tRNA ligase (420 aa).

Y38 serves as a coordination point for L-tyrosine. The 'HIGH' region motif lies at 43–52; the sequence is PTGDSLHIGH. The L-tyrosine site is built by Y169 and Q173. Residues 231-235 carry the 'KMSKS' region motif; the sequence is KFGKS. ATP is bound at residue K234. Positions 353-419 constitute an S4 RNA-binding domain; that stretch reads KNLVDFLVDT…GKRKYTLVTI (67 aa).

It belongs to the class-I aminoacyl-tRNA synthetase family. TyrS type 1 subfamily. As to quaternary structure, homodimer.

Its subcellular location is the cytoplasm. The catalysed reaction is tRNA(Tyr) + L-tyrosine + ATP = L-tyrosyl-tRNA(Tyr) + AMP + diphosphate + H(+). Its function is as follows. Catalyzes the attachment of tyrosine to tRNA(Tyr) in a two-step reaction: tyrosine is first activated by ATP to form Tyr-AMP and then transferred to the acceptor end of tRNA(Tyr). This is Tyrosine--tRNA ligase from Lactobacillus helveticus (strain DPC 4571).